The sequence spans 830 residues: Periplasmic nitrate reductase (830 aa).

The tat-type signal signal peptide spans Met-1 to Asn-30. The region spanning Leu-40 to Asp-96 is the 4Fe-4S Mo/W bis-MGD-type domain. Cys-47, Cys-50, Cys-54, and Cys-82 together coordinate [4Fe-4S] cluster. Mo-bis(molybdopterin guanine dinucleotide) contacts are provided by residues Lys-84, Gln-151, Asn-176, Cys-180, Trp-213–Met-220, Ser-244–His-248, Met-374, Gln-378, Asn-484, Ser-510–Glu-511, Lys-533, Asp-560, and Thr-720–Ser-729. Trp-796 contacts substrate. The Mo-bis(molybdopterin guanine dinucleotide) site is built by Asn-804 and Lys-821.

Belongs to the prokaryotic molybdopterin-containing oxidoreductase family. NasA/NapA/NarB subfamily. As to quaternary structure, component of the periplasmic nitrate reductase NapAB complex composed of NapA and NapB. It depends on [4Fe-4S] cluster as a cofactor. Mo-bis(molybdopterin guanine dinucleotide) serves as cofactor. Predicted to be exported by the Tat system. The position of the signal peptide cleavage has not been experimentally proven.

The protein resides in the periplasm. The enzyme catalyses 2 Fe(II)-[cytochrome] + nitrate + 2 H(+) = 2 Fe(III)-[cytochrome] + nitrite + H2O. Functionally, catalytic subunit of the periplasmic nitrate reductase complex NapAB. Receives electrons from NapB and catalyzes the reduction of nitrate to nitrite. This Hahella chejuensis (strain KCTC 2396) protein is Periplasmic nitrate reductase.